Here is a 112-residue protein sequence, read N- to C-terminus: Divalent-cation tolerance protein CutA (112 aa).

C16, H83, and H84 together coordinate Cu cation.

This sequence belongs to the CutA family. As to quaternary structure, homotrimer. It depends on Cu cation as a cofactor.

It localises to the cytoplasm. Its function is as follows. Involved in resistance toward heavy metals. In Shigella flexneri, this protein is Divalent-cation tolerance protein CutA.